A 420-amino-acid polypeptide reads, in one-letter code: Amino acid decarboxylase lolD1 (420 aa).

An N6-(pyridoxal phosphate)lysine modification is found at K62. Pyridoxal 5'-phosphate is bound by residues S194, G231, and 266 to 269 (EPGT). Substrate is bound at residue 315–316 (IV). The active-site Proton donor; shared with dimeric partner is C351. The residue at position 351 (C351) is an S-nitrosocysteine. D352 is a substrate binding site. Y381 is a pyridoxal 5'-phosphate binding site.

It belongs to the Orn/Lys/Arg decarboxylase class-II family. In terms of assembly, homodimer. Pyridoxal 5'-phosphate is required as a cofactor.

It functions in the pathway alkaloid biosynthesis. In terms of biological role, amino acid decarboxylase; part of the gene cluster that mediates the biosynthesis of loline alkaloids, potent insecticidal agents composed of a pyrrolizidine ring system and an uncommon ether bridge linking carbons 2 and 7. Lolines are structurally differentiated by the various modifications of the L-amino group and include norloline, loline, N-methylloline, N-acetylloline, N-acetylnorloline, and N-formylloline. The first committed step is the condensation of O-acetyl-L-homoserine (derived from L-aspartic acid) and L-proline, probably catalyzed by the gamma-type pyridoxal 5'-phosphate(PLP)-dependent enzyme lolC, to give the diamino diacid, NACPP. Ensuing cyclization, decarboxylation, and acetylation steps yield 1-exo-acetamidopyrrolizidine (AcAP). LolO is required for installation of the ether bridge upon the pathway intermediate, 1-exo-acetamidopyrrolizidine (AcAP). In sequential 2-oxoglutarate- and O(2)-consuming steps, lolO removes hydrogens from C2 and C7 of AcAP to form both carbon-oxygen bonds in N-acetylnorloline (NANL), the precursor to all other lolines. The enzymes lolD, lolE, lolF and lolT have also been proposed to be involved in the ether-bridge installation. Further processing of the exocyclic moiety of NANL by fungal N-acetamidase (LolN), methyltransferase (LolM), and cytochrome P450 (LolP) enzymes, with occasional involvement of a plant acetyltransferase, generates the other known lolines. LolN transforms NANL to norlonine which is monomethylated and dimethylated to respectively lonine and N-methyllonine (NML) by lolM. LolP catalyzes hydroxylation of the methyl group in N-methylloline (NML) and further oxygenation to N-formylloline (NFL). A plant acetyltransferase is responsible for the acetylation of loline to form N-acetylloline (NAL). LolA might interact with aspartate kinase to prevent feedback inhibition of its activity by these end products and thereby promote production of L-homoserine from L-aspartate. The sequence is that of Amino acid decarboxylase lolD1 from Epichloe uncinata (Endophyte fungus).